We begin with the raw amino-acid sequence, 287 residues long: MAADAHAPTASEYIVHHLQHLQNIKQKSIIDFSVVNLDSVAVSVILGVLGLFVMWLAARTATSGVPGRFQAAVEMLVEMVDNQAKANIHNAQSRKFIAPLALTVFVWIFLMNAMDLLPVDLLPVLWQGATGDSHAYLRVVPTADLSTTLGLSSAVLILCFVYSIKIKGMGGWAHELVTAPFGTSKNPVFALILGVVNLLMQIIEYVAKTVSHGMRLFGNMYAGELVFMLIALMGGAAAMSLSGVLLPVGHIIAGSIWAIFHILIITLQAFIFMMLTLIYLGQAHEAH.

Helical transmembrane passes span 37 to 57 (LDSV…MWLA), 96 to 116 (FIAP…AMDL), 144 to 164 (DLST…VYSI), 187 to 207 (PVFA…EYVA), 224 to 244 (ELVF…LSGV), and 266 to 286 (TLQA…AHEA).

Belongs to the ATPase A chain family. In terms of assembly, F-type ATPases have 2 components, CF(1) - the catalytic core - and CF(0) - the membrane proton channel. CF(1) has five subunits: alpha(3), beta(3), gamma(1), delta(1), epsilon(1). CF(0) has three main subunits: a(1), b(2) and c(9-12). The alpha and beta chains form an alternating ring which encloses part of the gamma chain. CF(1) is attached to CF(0) by a central stalk formed by the gamma and epsilon chains, while a peripheral stalk is formed by the delta and b chains.

The protein localises to the cell inner membrane. Key component of the proton channel; it plays a direct role in the translocation of protons across the membrane. This chain is ATP synthase subunit a, found in Acidovorax ebreus (strain TPSY) (Diaphorobacter sp. (strain TPSY)).